The sequence spans 195 residues: ADP-ribosylation factor L (195 aa).

The N-myristoyl glycine moiety is linked to residue G2. Residues 25–32 (GLENSGKT), 72–76 (DLLYP), and 131–134 (NKQD) each bind GTP.

This sequence belongs to the small GTPase superfamily. Arf family.

Its function is as follows. May be involved in trafficking events within the endosomal system. This chain is ADP-ribosylation factor L (arrL), found in Dictyostelium discoideum (Social amoeba).